The following is a 148-amino-acid chain: D-aminoacyl-tRNA deacylase (148 aa).

Positions 137 to 138 match the Gly-cisPro motif, important for rejection of L-amino acids motif; it reads GP.

It belongs to the DTD family. As to quaternary structure, homodimer.

The protein resides in the cytoplasm. The catalysed reaction is glycyl-tRNA(Ala) + H2O = tRNA(Ala) + glycine + H(+). It catalyses the reaction a D-aminoacyl-tRNA + H2O = a tRNA + a D-alpha-amino acid + H(+). In terms of biological role, an aminoacyl-tRNA editing enzyme that deacylates mischarged D-aminoacyl-tRNAs. Also deacylates mischarged glycyl-tRNA(Ala), protecting cells against glycine mischarging by AlaRS. Acts via tRNA-based rather than protein-based catalysis; rejects L-amino acids rather than detecting D-amino acids in the active site. By recycling D-aminoacyl-tRNA to D-amino acids and free tRNA molecules, this enzyme counteracts the toxicity associated with the formation of D-aminoacyl-tRNA entities in vivo and helps enforce protein L-homochirality. This is D-aminoacyl-tRNA deacylase from Latilactobacillus sakei subsp. sakei (strain 23K) (Lactobacillus sakei subsp. sakei).